The sequence spans 207 residues: RNA chaperone ProQ (207 aa).

Residues 100-156 (TLAESKAKVQARRKEQAQKARDEEKSKPKTKKAPQQRRANKPQAQKPAKQPVETRAL) are disordered. Positions 111-126 (RRKEQAQKARDEEKSK) are enriched in basic and acidic residues. The span at 127 to 139 (PKTKKAPQQRRAN) shows a compositional bias: basic residues.

Belongs to the ProQ family.

Its subcellular location is the cytoplasm. In terms of biological role, RNA chaperone with significant RNA binding, RNA strand exchange and RNA duplexing activities. This is RNA chaperone ProQ from Vibrio vulnificus (strain CMCP6).